The primary structure comprises 979 residues: METGSPGKRPVLPKRARLLVTAGMGMLALLLFGPRLVDIYVDWLWFGEVGFRSVWITVLLTRLAIVAAVALVVAGIVLAALLLAYRSRPFFVPDEPQRDPVAPLRSAVMRRPRLFGWGIAVTLGVVCGLIASFDWVKVQLFVHGGTFGIVDPEFGYDIGFFVFDLPFYRSVLNWLFVAVVLAFLASLLTHYLFGGLRLTTGRGMLTQAARVQLAVFAGAVVLLKAVAYWLDRYELLSSGRKEPTFTGAGYTDIHAELPAKLVLVAIAVLCAVSFFTAIFLRDLRIPAMAAALLVLSAILVGGLWPLLMEQFSVRPNAADVERPYIQRNIEATREAYRIGGDWVQYRSYPGIGTKQPRDVPVDVTTIAKVRLLDPHILSRTFTQQQQLKNFFSFAEILDIDRYRIDGELQDYIVGVREFSPKSLTGNQTDWINKHTVYTHGNGFVAAPANRVNAAARDAENISDSNSGYPIYAVSDIASLGSGRQVIPVEQPRVYYGEVIAQADPDYAIVGGAPGSAPREYDTDTSKYTYTGAGGVSIGNWFNRTVFATKVAQHKFLFSREIGSESKVLIHRDPKERVQRVAPWLTTDDNPYPVVVNGRIVWIVDAYTTLDTYPYAQRSSLEGPVTSPTGIVRQGKQVSYVRNSVKATVDAYDGTVTLFQFDRDDPVLRTWMRAFPGTVKSEDQIPDELRAHFRYPEDLFEVQRSLLAKYHVDEPREFFTTNAFWSVPSDPTNDANATQPPFYVLVGDQQSAQPSFRLASAMVGYNREFLSAYISAHSDPANYGKLTVLELPTDTLTQGPQQIQNSMISDTRVASERTLLERSNRIHYGNLLSLPIADGGVLYVEPLYTERISTSPSSSTFPQLSRVLVSVREPRTEGGVRVGYAPTLAESLDQVFGPGTGRVATXPGGDAASAPPPGAGGPAPPQGVPPPRTTQPPAAPPRGPDVPPATVAELRETLADLRAVLDRLEKAIDAAETPGG.

Helical transmembrane passes span 19-41 (LVTA…DIYV), 63-85 (LAIV…LLAY), 114-136 (LFGW…FDWV), 174-196 (WLFV…FGGL), 208-230 (AARV…AYWL), 261-280 (LVLV…AIFL), and 285-307 (IPAM…WPLL). The tract at residues 894–948 (VFGPGTGRVATXPGGDAASAPPPGAGGPAPPQGVPPPRTTQPPAAPPRGPDVPPA) is disordered. The span at 913-946 (APPPGAGGPAPPQGVPPPRTTQPPAAPPRGPDVP) shows a compositional bias: pro residues.

The protein belongs to the UPF0182 family.

The protein localises to the cell membrane. In Mycobacterium tuberculosis (strain CDC 1551 / Oshkosh), this protein is UPF0182 protein MT0070.